Consider the following 122-residue polypeptide: Large-conductance mechanosensitive channel (122 aa).

Transmembrane regions (helical) follow at residues 29 to 49 (FGKI…GLIF) and 66 to 86 (GVFI…FLFI).

Belongs to the MscL family. Homopentamer.

The protein localises to the cell membrane. In terms of biological role, channel that opens in response to stretch forces in the membrane lipid bilayer. May participate in the regulation of osmotic pressure changes within the cell. This Macrococcus caseolyticus (strain JCSC5402) (Macrococcoides caseolyticum) protein is Large-conductance mechanosensitive channel.